Consider the following 372-residue polypeptide: MADS-box transcription factor pvg4 (372 aa).

The region spanning 1 to 61 (MGRKKISIAP…GRLHVFCSSD (61 aa)) is the MADS-box domain. The tract at residues 81-187 (SHFSSSPVEE…HPPHPHFHNN (107 aa)) is disordered. Over residues 84–100 (SSSPVEESSTVSPETTT) the composition is skewed to low complexity. Positions 114 to 145 (QDQPLSDSQLDTGDSPATSETTVQDYNPQVQS) are enriched in polar residues. A compositionally biased stretch (basic residues) spans 167–184 (QHHHPHTRPPHHPPHPHF).

It localises to the nucleus. Its function is as follows. Acts in transcription regulation. May bind to a MEF2-like typee II promoter sequence. This chain is MADS-box transcription factor pvg4 (pvg4), found in Schizosaccharomyces pombe (strain 972 / ATCC 24843) (Fission yeast).